A 184-amino-acid chain; its full sequence is Phosducin-like protein 3 (184 aa).

Residues 45–184 (HGELKEIDEQ…VKNNKFKEDD (140 aa)) are thioredoxin fold.

Belongs to the phosducin family.

This chain is Phosducin-like protein 3 (phlp3), found in Dictyostelium discoideum (Social amoeba).